Consider the following 207-residue polypeptide: MARYLGPKAKLSRREGTDLFLKSARRAISDKAKFDSKPGQHGRTSGTRTSDFGLQLREKQKVKRMYGVLEKQFRRYFEEADRRKGNTGANLLFILESRLDNVVYRMGFGSTRAEARQLVSHKAITVNGNSVNIPSYMVKTGDVIAVRDKSKKQTRVTEALELAKQVGLPAWVDVNADKGEGVFKKVPDRDEFAADVNESLIVELYSR.

A disordered region spans residues 31 to 53 (KAKFDSKPGQHGRTSGTRTSDFG). Polar residues predominate over residues 42–52 (GRTSGTRTSDF). One can recognise an S4 RNA-binding domain in the interval 97–158 (SRLDNVVYRM…KSKKQTRVTE (62 aa)).

It belongs to the universal ribosomal protein uS4 family. Part of the 30S ribosomal subunit. Contacts protein S5. The interaction surface between S4 and S5 is involved in control of translational fidelity.

One of the primary rRNA binding proteins, it binds directly to 16S rRNA where it nucleates assembly of the body of the 30S subunit. Its function is as follows. With S5 and S12 plays an important role in translational accuracy. This Polaromonas sp. (strain JS666 / ATCC BAA-500) protein is Small ribosomal subunit protein uS4.